The following is a 193-amino-acid chain: NADH-quinone oxidoreductase subunit B (193 aa).

[4Fe-4S] cluster is bound by residues C72, C73, C137, and C167.

This sequence belongs to the complex I 20 kDa subunit family. NDH-1 is composed of 14 different subunits. Subunits NuoB, C, D, E, F, and G constitute the peripheral sector of the complex. [4Fe-4S] cluster is required as a cofactor.

The protein resides in the cell inner membrane. It carries out the reaction a quinone + NADH + 5 H(+)(in) = a quinol + NAD(+) + 4 H(+)(out). Its function is as follows. NDH-1 shuttles electrons from NADH, via FMN and iron-sulfur (Fe-S) centers, to quinones in the respiratory chain. Couples the redox reaction to proton translocation (for every two electrons transferred, four hydrogen ions are translocated across the cytoplasmic membrane), and thus conserves the redox energy in a proton gradient. This is NADH-quinone oxidoreductase subunit B from Brucella anthropi (strain ATCC 49188 / DSM 6882 / CCUG 24695 / JCM 21032 / LMG 3331 / NBRC 15819 / NCTC 12168 / Alc 37) (Ochrobactrum anthropi).